A 604-amino-acid polypeptide reads, in one-letter code: Phenylalanine--tRNA ligase beta subunit (604 aa).

Residues 327 to 402 (YFQEKREVAH…LGRTLDRFSP (76 aa)) enclose the B5 domain. Asp-380, Asp-386, Glu-389, and Glu-390 together coordinate Mg(2+).

The protein belongs to the phenylalanyl-tRNA synthetase beta subunit family. Type 2 subfamily. In terms of assembly, tetramer of two alpha and two beta subunits. Mg(2+) serves as cofactor.

The protein resides in the cytoplasm. The catalysed reaction is tRNA(Phe) + L-phenylalanine + ATP = L-phenylalanyl-tRNA(Phe) + AMP + diphosphate + H(+). The chain is Phenylalanine--tRNA ligase beta subunit from Treponema pallidum subsp. pallidum (strain SS14).